The primary structure comprises 61 residues: Photosystem II reaction center protein K (61 aa).

Positions 1–24 (MLNIFSLMYICLNSALYSSSFLFA) are excised as a propeptide. Residues 40 to 60 (MPVIPVLFFLLAFVWQAAVSF) traverse the membrane as a helical segment.

The protein belongs to the PsbK family. In terms of assembly, PSII is composed of 1 copy each of membrane proteins PsbA, PsbB, PsbC, PsbD, PsbE, PsbF, PsbH, PsbI, PsbJ, PsbK, PsbL, PsbM, PsbT, PsbX, PsbY, PsbZ, Psb30/Ycf12, at least 3 peripheral proteins of the oxygen-evolving complex and a large number of cofactors. It forms dimeric complexes.

It localises to the plastid. It is found in the chloroplast thylakoid membrane. Its function is as follows. One of the components of the core complex of photosystem II (PSII). PSII is a light-driven water:plastoquinone oxidoreductase that uses light energy to abstract electrons from H(2)O, generating O(2) and a proton gradient subsequently used for ATP formation. It consists of a core antenna complex that captures photons, and an electron transfer chain that converts photonic excitation into a charge separation. The polypeptide is Photosystem II reaction center protein K (Citrus sinensis (Sweet orange)).